Consider the following 657-residue polypeptide: Folic acid synthesis protein FOL1 (657 aa).

The segment at 1–116 is DHNA; sequence MDKIIIKDLL…WPGVQIERTL (116 aa). Residues 149–274 form an HPPK region; that stretch reads YLAFGSNLGD…FVLLPLSDIA (126 aa). A Pterin-binding domain is found at 333–641; it reads TFIMGILNVT…DIPEIRDAML (309 aa). Residues 335 to 657 form a DHPS region; that stretch reads IMGILNVTPD…KPQRRYQIQK (323 aa). N340 is a Mg(2+) binding site. (7,8-dihydropterin-6-yl)methyl diphosphate contacts are provided by T380, D416, and N435. A disordered region spans residues 466–524; the sequence is LNNSNDSNSNSSINTNGEDNNNNNNNNNNNNNNNNNNNNNNNNNDDNDNDNRSKIKQKI. Over residues 467 to 509 the composition is skewed to low complexity; the sequence is NNSNDSNSNSSINTNGEDNNNNNNNNNNNNNNNNNNNNNNNNN. Residues 514-524 show a composition bias toward basic and acidic residues; sequence NDNRSKIKQKI. (7,8-dihydropterin-6-yl)methyl diphosphate contacts are provided by residues D547, K583, and 629 to 631; that span reads RIH.

In the N-terminal section; belongs to the DHNA family. It in the central section; belongs to the HPPK family. This sequence in the C-terminal section; belongs to the DHPS family. It depends on Mg(2+) as a cofactor.

The enzyme catalyses 7,8-dihydroneopterin = 6-hydroxymethyl-7,8-dihydropterin + glycolaldehyde. The catalysed reaction is 6-hydroxymethyl-7,8-dihydropterin + ATP = (7,8-dihydropterin-6-yl)methyl diphosphate + AMP + H(+). It carries out the reaction (7,8-dihydropterin-6-yl)methyl diphosphate + 4-aminobenzoate = 7,8-dihydropteroate + diphosphate. It functions in the pathway cofactor biosynthesis; tetrahydrofolate biosynthesis; 2-amino-4-hydroxy-6-hydroxymethyl-7,8-dihydropteridine diphosphate from 7,8-dihydroneopterin triphosphate: step 3/4. Its pathway is cofactor biosynthesis; tetrahydrofolate biosynthesis; 2-amino-4-hydroxy-6-hydroxymethyl-7,8-dihydropteridine diphosphate from 7,8-dihydroneopterin triphosphate: step 4/4. The protein operates within cofactor biosynthesis; tetrahydrofolate biosynthesis; 7,8-dihydrofolate from 2-amino-4-hydroxy-6-hydroxymethyl-7,8-dihydropteridine diphosphate and 4-aminobenzoate: step 1/2. Functionally, catalyzes three sequential steps of tetrahydrofolate biosynthesis. The sequence is that of Folic acid synthesis protein FOL1 (fol1) from Dictyostelium discoideum (Social amoeba).